The chain runs to 641 residues: Protein zwilch (641 aa).

The residue at position 312 (serine 312) is a Phosphoserine.

It belongs to the ZWILCH family. As to quaternary structure, component of the RZZ complex composed of rod, Zw10 and Zwilch.

The protein resides in the cytoplasm. It is found in the chromosome. The protein localises to the centromere. It localises to the kinetochore. Its subcellular location is the cytoskeleton. The protein resides in the spindle. Essential component of the mitotic checkpoint, which prevents cells from prematurely exiting mitosis. Required for the assembly of the dynein-dynactin, Mad2 complexes and spindly/CG15415 onto kinetochores. Its function related to the spindle assembly machinery is proposed to depend on its association in the RZZ complex. Failure to assemble the complex due to the absence of any one of its components, results in the incorrect redistribution of the remaining components to diverse membrane compartments. In Drosophila melanogaster (Fruit fly), this protein is Protein zwilch.